The following is a 155-amino-acid chain: RNA pyrophosphohydrolase (155 aa).

One can recognise a Nudix hydrolase domain in the interval 6 to 148 (GYRANVAIVL…KQDVYRRALT (143 aa)). The Nudix box motif lies at 38–59 (GGVATGETPLQAMYRELYEEVG).

This sequence belongs to the Nudix hydrolase family. RppH subfamily. A divalent metal cation serves as cofactor.

In terms of biological role, accelerates the degradation of transcripts by removing pyrophosphate from the 5'-end of triphosphorylated RNA, leading to a more labile monophosphorylated state that can stimulate subsequent ribonuclease cleavage. This chain is RNA pyrophosphohydrolase, found in Francisella philomiragia subsp. philomiragia (strain ATCC 25017 / CCUG 19701 / FSC 153 / O#319-036).